Consider the following 113-residue polypeptide: Hydrogenase maturation factor HypA (113 aa).

Position 2 (histidine 2) interacts with Ni(2+). Zn(2+) contacts are provided by cysteine 73, cysteine 76, cysteine 89, and cysteine 92.

The protein belongs to the HypA/HybF family.

Functionally, involved in the maturation of [NiFe] hydrogenases. Required for nickel insertion into the metal center of the hydrogenase. In Rhizobium leguminosarum bv. viciae, this protein is Hydrogenase maturation factor HypA.